A 101-amino-acid chain; its full sequence is Small ribosomal subunit protein uS14 (101 aa).

Belongs to the universal ribosomal protein uS14 family. As to quaternary structure, part of the 30S ribosomal subunit. Contacts proteins S3 and S10.

Its function is as follows. Binds 16S rRNA, required for the assembly of 30S particles and may also be responsible for determining the conformation of the 16S rRNA at the A site. The chain is Small ribosomal subunit protein uS14 from Shewanella putrefaciens (strain CN-32 / ATCC BAA-453).